The following is a 383-amino-acid chain: tRNA-specific 2-thiouridylase MnmA (383 aa).

ATP contacts are provided by residues 29-36 and methionine 55; that span reads GMSGGVDS. The interval 115–117 is interaction with target base in tRNA; that stretch reads NPD. Cysteine 120 functions as the Nucleophile in the catalytic mechanism. Residues cysteine 120 and cysteine 217 are joined by a disulfide bond. Glycine 145 contributes to the ATP binding site. Positions 167–169 are interaction with tRNA; the sequence is KDQ. The active-site Cysteine persulfide intermediate is cysteine 217. The interval 329–330 is interaction with tRNA; that stretch reads RY.

It belongs to the MnmA/TRMU family.

Its subcellular location is the cytoplasm. It carries out the reaction S-sulfanyl-L-cysteinyl-[protein] + uridine(34) in tRNA + AH2 + ATP = 2-thiouridine(34) in tRNA + L-cysteinyl-[protein] + A + AMP + diphosphate + H(+). Catalyzes the 2-thiolation of uridine at the wobble position (U34) of tRNA, leading to the formation of s(2)U34. The polypeptide is tRNA-specific 2-thiouridylase MnmA (Histophilus somni (strain 2336) (Haemophilus somnus)).